The sequence spans 34 residues: Delta-conotoxin AtVIA (34 aa).

Positions 1–4 are excised as a propeptide; that stretch reads LSKK. Pyrrolidone carboxylic acid is present on glutamine 5. 3 disulfides stabilise this stretch: cysteine 6–cysteine 23, cysteine 13–cysteine 27, and cysteine 22–cysteine 31.

Expressed by the venom duct.

The protein localises to the secreted. Functionally, probable toxin from a worm-hunter cone snail. Shows an excitatory activity on a majority of mouse lumbar dorsal root ganglion (DRG) neurons. Very probably inhibits the inactivation of voltage-gated sodium channels (Nav). This chain is Delta-conotoxin AtVIA, found in Conus ateralbus (Cone snail).